A 47-amino-acid chain; its full sequence is Delta-actitoxin-Ael1b (47 aa).

Disulfide bonds link cysteine 4/cysteine 44, cysteine 6/cysteine 34, and cysteine 27/cysteine 45.

Belongs to the sea anemone sodium channel inhibitory toxin family. Type I subfamily.

The protein localises to the secreted. It localises to the nematocyst. Produces a positive inotropic effect in mammalian heart muscle. Modifies current passing through the fast sodium channel (Nav) in neuroblastoma cells, leading to delayed and incomplete inactivation. Paralyzes the shore crab (C.maenas) by tetanic contractions after intramuscular injection. This chain is Delta-actitoxin-Ael1b, found in Anthopleura elegantissima (Green aggregating anemone).